A 318-amino-acid chain; its full sequence is Non-homologous end joining protein Ku (318 aa).

The 184-residue stretch at 10-193 (AFGLVNVPVK…EVQIKPAELK (184 aa)) folds into the Ku domain. Residues 259–318 (SVKARKGGKSDSKDDSDSESDSKESKSDSKPAKKAPAKKAAAKKSTAKKAPAKKAAAKKS) are disordered. Residues 266-289 (GKSDSKDDSDSESDSKESKSDSKP) show a composition bias toward basic and acidic residues. Basic residues predominate over residues 290–318 (AKKAPAKKAAAKKSTAKKAPAKKAAAKKS).

It belongs to the prokaryotic Ku family. As to quaternary structure, homodimer. Interacts with Sir2 and probably also with LigD; may form a trimeric complex during NHEJ.

With LigD forms a non-homologous end joining (NHEJ) repair enzyme which repairs blunt-end and 5'-overhang double strand breaks (DSB) with about 50% fidelity, and DSB with non-complementary 3' ends. Plays a partial role in NHEJ on 3'-overhang repair of complementary ends. NHEJ repairs DSB with blunt ends and 5' overhangs with a high level of nucleotide insertion/deletion, without a need for microhomology. This protein but not LigD also suppresses homologous recombination. Overexpression dramatically increases the efficiency of NHEJ with no effect on repair fidelity. The protein is Non-homologous end joining protein Ku of Mycolicibacterium smegmatis (strain ATCC 700084 / mc(2)155) (Mycobacterium smegmatis).